Here is a 64-residue protein sequence, read N- to C-terminus: Large ribosomal subunit protein bL35 (64 aa).

This sequence belongs to the bacterial ribosomal protein bL35 family.

The chain is Large ribosomal subunit protein bL35 from Chloroherpeton thalassium (strain ATCC 35110 / GB-78).